Here is an 83-residue protein sequence, read N- to C-terminus: MVTIRLARGGSKKRPFYHLTVTNSRNPRDGRFVERIGFFNPIATGAEVKLSVNQERAAYWLSQGAQPSERVAQLLKEAAKAAA.

This sequence belongs to the bacterial ribosomal protein bS16 family.

The protein is Small ribosomal subunit protein bS16 of Stutzerimonas stutzeri (strain A1501) (Pseudomonas stutzeri).